Consider the following 89-residue polypeptide: HssA/B-like protein 15 (89 aa).

It belongs to the hssA/B family.

This chain is HssA/B-like protein 15 (hssl15), found in Dictyostelium discoideum (Social amoeba).